The chain runs to 103 residues: Large ribosomal subunit protein bL21 (103 aa).

Belongs to the bacterial ribosomal protein bL21 family. Part of the 50S ribosomal subunit. Contacts protein L20.

This protein binds to 23S rRNA in the presence of protein L20. This Mannheimia succiniciproducens (strain KCTC 0769BP / MBEL55E) protein is Large ribosomal subunit protein bL21.